We begin with the raw amino-acid sequence, 316 residues long: Very long chain fatty acid elongase 6 (316 aa).

An N-linked (GlcNAc...) asparagine glycan is attached at N11. 6 helical membrane passes run 30 to 50, 64 to 84, 117 to 137, 142 to 162, 167 to 189, and 202 to 222; these read WMLE…LVIF, LRGP…MGAA, FWTW…IFIV, PLIF…WFSY, SSAR…YYAL, and MIIT…NVWA. An N-linked (GlcNAc...) asparagine glycan is attached at N242. The helical transmembrane segment at 245 to 265 threads the bilayer; sequence IAMYSSYFVLFARFFYKAYLA.

Belongs to the ELO family. ELOVL6 subfamily. As to expression, detected in the CNS (central nervous system) of third larval instar (at protein level). Expressed in cyst progenitor cells (at protein level). In the adult fly, expressed in several tissues including, sperm, follicular epithelium, nurse cells and cyst cells.

Its subcellular location is the mitochondrion outer membrane. It localises to the endoplasmic reticulum membrane. It catalyses the reaction a very-long-chain acyl-CoA + malonyl-CoA + H(+) = a very-long-chain 3-oxoacyl-CoA + CO2 + CoA. It carries out the reaction hexadecanoyl-CoA + malonyl-CoA + H(+) = 3-oxooctadecanoyl-CoA + CO2 + CoA. Its pathway is lipid metabolism; fatty acid biosynthesis. Catalyzes the first and rate-limiting reaction of the four reactions that constitute the long-chain fatty acids elongation cycle. This process allows the addition of 2 carbons to the chain of long- and very long-chain fatty acids (VLCFAs) per cycle. Condensing enzyme that elongates fatty acids with 12, 14 and 16 carbons with higher activity toward C16:0 acyl-CoAs. Catalyzes the synthesis of unsaturated C16 long chain fatty acids and, to a lesser extent, C18:0 and those with low desaturation degree. May participate in the production of saturated and monounsaturated VLCFAs of different chain lengths that are involved in multiple biological processes as precursors of membrane lipids and lipid mediators. The polypeptide is Very long chain fatty acid elongase 6 (Drosophila melanogaster (Fruit fly)).